The chain runs to 245 residues: 1-(5-phosphoribosyl)-5-[(5-phosphoribosylamino)methylideneamino] imidazole-4-carboxamide isomerase (245 aa).

The Proton acceptor role is filled by D8. D130 functions as the Proton donor in the catalytic mechanism.

This sequence belongs to the HisA/HisF family.

It localises to the cytoplasm. The enzyme catalyses 1-(5-phospho-beta-D-ribosyl)-5-[(5-phospho-beta-D-ribosylamino)methylideneamino]imidazole-4-carboxamide = 5-[(5-phospho-1-deoxy-D-ribulos-1-ylimino)methylamino]-1-(5-phospho-beta-D-ribosyl)imidazole-4-carboxamide. Its pathway is amino-acid biosynthesis; L-histidine biosynthesis; L-histidine from 5-phospho-alpha-D-ribose 1-diphosphate: step 4/9. The sequence is that of 1-(5-phosphoribosyl)-5-[(5-phosphoribosylamino)methylideneamino] imidazole-4-carboxamide isomerase from Pseudomonas fluorescens (strain ATCC BAA-477 / NRRL B-23932 / Pf-5).